The sequence spans 292 residues: AKT-interacting protein (292 aa).

The span at 1-11 shows a compositional bias: polar residues; sequence MNPFWSMSTSS. Residues 1–63 form a disordered region; the sequence is MNPFWSMSTS…TSPAPAAQST (63 aa). Residues 14–23 are compositionally biased toward basic and acidic residues; sequence KRSEGEEKTL. Ser30 is subject to Phosphoserine. The UBC core domain occupies 74–222; the sequence is YLEYSLLAEF…VVDSVKVCTA (149 aa).

It belongs to the ubiquitin-conjugating enzyme family. FTS subfamily. As to quaternary structure, component of the FTS/Hook/FHIP complex (FHF complex), composed of AKTIP/FTS, FHIP1B, and one or more members of the Hook family of proteins HOOK1, HOOK2, and HOOK3. Interacts directly with HOOK1, HOOK2 and HOOK3. The FHF complex associates with the homotypic vesicular sorting complex (the HOPS complex). Also interacts with AKT1. May interact with FHIP1A.

Its subcellular location is the cytoplasm. It is found in the cell membrane. In terms of biological role, component of the FTS/Hook/FHIP complex (FHF complex). The FHF complex may function to promote vesicle trafficking and/or fusion via the homotypic vesicular protein sorting complex (the HOPS complex). Regulates apoptosis by enhancing phosphorylation and activation of AKT1. Increases release of TNFSF6 via the AKT1/GSK3B/NFATC1 signaling cascade. FHF complex promotes the distribution of AP-4 complex to the perinuclear area of the cell. The sequence is that of AKT-interacting protein from Homo sapiens (Human).